The primary structure comprises 773 residues: Mitochondrial inner membrane m-AAA protease component yta12 (773 aa).

The disordered stretch occupies residues 83–119; sequence FSVTSKRSQNGSSGSNSDANGRKNGQKNDDSKKKGLN. The span at 87 to 101 shows a compositional bias: low complexity; it reads SKRSQNGSSGSNSDA. The next 2 helical transmembrane spans lie at 126 to 146 and 239 to 259; these read VFEI…AYIL and VLAT…VIYL. Positions 298, 299, 340, 341, 342, 343, 344, and 479 each coordinate ATP. His561 is a binding site for Zn(2+). Glu562 is a catalytic residue. The Zn(2+) site is built by His565 and Asp638. Positions 752–773 are disordered; the sequence is EYKNDHDPRNPPIPPSPQQPSA. Residues 761-773 are compositionally biased toward pro residues; that stretch reads NPPIPPSPQQPSA.

This sequence in the N-terminal section; belongs to the AAA ATPase family. It in the C-terminal section; belongs to the peptidase M41 family. As to quaternary structure, component of the m-AAA protease complex. Zn(2+) is required as a cofactor.

It localises to the mitochondrion membrane. It carries out the reaction ATP + H2O = ADP + phosphate + H(+). Functionally, catalytic component of the m-AAA protease, a protease that plays a key role in proteostasis of inner mitochondrial membrane proteins. Possesses both ATPase and protease activities: the ATPase activity is required to unfold substrates, threading them into the internal proteolytic cavity for hydrolysis into small peptide fragments. The complex is necessary for the assembly of mitochondrial respiratory chain and ATPase complexes. The m-AAA protease carries out protein quality control in the inner membrane of the mitochondria by mediating degradation of mistranslated or misfolded polypeptides. It also mediates protein maturation of the mitochondrial ribosomal subunit mrpl32/bL32m by catalyzing the cleavage of the presequence of mrpl32/bL32m prior to assembly into the mitochondrial ribosome. Also acts as a membrane protein dislocase: required to dislocate moderately hydrophobic transmembrane segments from the membrane. The protein is Mitochondrial inner membrane m-AAA protease component yta12 (yta12) of Schizosaccharomyces pombe (strain 972 / ATCC 24843) (Fission yeast).